We begin with the raw amino-acid sequence, 175 residues long: Replication restart protein PriC (175 aa).

This sequence belongs to the PriC family. In terms of assembly, monomer. Oligomerizes in the absence of DNA. Component of the replication restart primosome, which is composed of PriA, PriB, PriC, DnaB and DnaT; DnaG primase associates transiently with this complex. Interacts with the C-terminus of SSB; this interaction is required for DnaB loading onto substrate replication forks. Interacts with DnaB alone and in the DnaB-DnaC complex, probably 1:1 binding with DnaB.

In terms of biological role, involved in the restart of stalled replication forks, which reloads the replicative helicase (DnaB) on sites other than the origin of replication. Recognizes abandoned replication forks and remodels DNA single-stranded binding protein (SSB) on ssDNA to uncover a loading site for DnaB. There are several restart pathways, the PriA-PriC pathway is a minor restart pathway. Also part of the minor PriC-Rep pathway for restart of stalled replication forks, which has a different substrate specificity than PriA. priB and priC have redundant roles in the cell. Stimulates the 3'-5' helicase activity of Rep helicase in vitro. In vitro can load the DnaB replicative helicase from a DnaB-DnaC complex on an SSB-coated stalled replication fork with no leading- or lagging-strand (or with a gap between the leading strand and fork junction) in the absence of other primosome proteins (PriA, PriB or DnaT). Also part of the major restart pathway with PriA, PriB, DnaB, DnaT and DnaG primase. PriC may contribute to the stability of the preprimosome complex. Preferentially binds approximately 7-9 nucleotides of single-stranded (ss)DNA, also binds double-stranded (ds)DNA. PriB is probably more important in the cell than PriC. This Escherichia coli (strain K12) protein is Replication restart protein PriC.